The following is a 324-amino-acid chain: BURP domain-containing protein 5 (324 aa).

A signal peptide spans methionine 1–alanine 30. In terms of domain architecture, BURP spans phenylalanine 109–arginine 323.

Expressed in panicles.

The sequence is that of BURP domain-containing protein 5 (BURP5) from Oryza sativa subsp. japonica (Rice).